We begin with the raw amino-acid sequence, 800 residues long: Serine/threonine-protein kinase KIN4 (800 aa).

The 268-residue stretch at 46–313 (YIIGSTLGEG…LQTIKRHVWL (268 aa)) folds into the Protein kinase domain. Residues 52–60 (LGEGEFGKV) and K80 each bind ATP. D175 acts as the Proton acceptor in catalysis. Disordered regions lie at residues 331-397 (LQKE…GSKV) and 438-487 (SARH…TSFT). A compositionally biased stretch (low complexity) spans 348–358 (STYSSSASSYS). Residues S365 and S388 each carry the phosphoserine modification. Composition is skewed to polar residues over residues 380 to 395 (QLAT…STGS) and 459 to 473 (GSPT…PSSK). S521 carries the phosphoserine modification. 2 disordered regions span residues 629–661 (EPTN…DKDS) and 678–754 (SLNG…PGRS). The span at 678–721 (SLNGSRSTVESRTSKGNAPPVSSRNPSGQSNRSNIKITQQQPRN) shows a compositional bias: polar residues. Basic and acidic residues predominate over residues 727 to 740 (PNPDKKINDNRIRD). The residue at position 748 (S748) is a Phosphoserine.

This sequence belongs to the protein kinase superfamily. Ser/Thr protein kinase family.

It carries out the reaction L-seryl-[protein] + ATP = O-phospho-L-seryl-[protein] + ADP + H(+). It catalyses the reaction L-threonyl-[protein] + ATP = O-phospho-L-threonyl-[protein] + ADP + H(+). In terms of biological role, this protein is probably a serine/threonine protein kinase. The chain is Serine/threonine-protein kinase KIN4 (KIN4) from Saccharomyces cerevisiae (strain ATCC 204508 / S288c) (Baker's yeast).